The primary structure comprises 37 residues: GILSLFTGGIKALGKTLFKMAGKAGAEHLACKATNQC.

Cysteines 31 and 37 form a disulfide.

Expressed by the skin glands.

It localises to the secreted. Functionally, antibacterial activity against Gram-positive bacterium S.aureus and Gram-negative bacterium E.coli. Has activity against C.albicans. This chain is Esculentin-2L, found in Rana luteiventris (Columbia spotted frog).